Reading from the N-terminus, the 398-residue chain is Cell cycle checkpoint control protein RAD9B (398 aa).

The span at 272-281 (RTSSPQSLRL) shows a compositional bias: polar residues. The interval 272 to 359 (RTSSPQSLRL…DMEEGQSPSP (88 aa)) is disordered. The segment covering 324-336 (SSSAAETRRASAS) has biased composition (low complexity). Phosphoserine occurs at positions 349 and 358.

This sequence belongs to the rad9 family. As to quaternary structure, interacts with HUS1, HUS1B, RAD1, RAD9A and RAD17.

In Rattus norvegicus (Rat), this protein is Cell cycle checkpoint control protein RAD9B (Rad9b).